Reading from the N-terminus, the 594-residue chain is NADH-quinone oxidoreductase subunit C/D (594 aa).

Residues 1–185 (MTTGSALYIP…DPFSLNLAKQ (185 aa)) are NADH dehydrogenase I subunit C. Residues 209–594 (DYMFLNLGPN…IDFVMADVDR (386 aa)) form an NADH dehydrogenase I subunit D region.

This sequence in the N-terminal section; belongs to the complex I 30 kDa subunit family. It in the C-terminal section; belongs to the complex I 49 kDa subunit family. As to quaternary structure, NDH-1 is composed of 13 different subunits. Subunits NuoB, CD, E, F, and G constitute the peripheral sector of the complex.

Its subcellular location is the cell inner membrane. It catalyses the reaction a quinone + NADH + 5 H(+)(in) = a quinol + NAD(+) + 4 H(+)(out). Functionally, NDH-1 shuttles electrons from NADH, via FMN and iron-sulfur (Fe-S) centers, to quinones in the respiratory chain. The immediate electron acceptor for the enzyme in this species is believed to be ubiquinone. Couples the redox reaction to proton translocation (for every two electrons transferred, four hydrogen ions are translocated across the cytoplasmic membrane), and thus conserves the redox energy in a proton gradient. This is NADH-quinone oxidoreductase subunit C/D from Pseudomonas fluorescens (strain SBW25).